Reading from the N-terminus, the 80-residue chain is Metallothionein-like protein type 2 (80 aa).

The protein belongs to the metallothionein superfamily. Type 15 family.

Functionally, metallothioneins have a high content of cysteine residues that bind various heavy metals. In Brassica campestris (Field mustard), this protein is Metallothionein-like protein type 2.